A 21-amino-acid chain; its full sequence is Azemiopsin (21 aa).

Pro residues predominate over residues 1–14 (DNWWPKPPHQGPRP). The tract at residues 1–21 (DNWWPKPPHQGPRPPRPRPKP) is disordered. Implicated in receptor binding regions lie at residues 3–6 (WWPK), 8–11 (PHQG), and 13–14 (RP).

In terms of assembly, monomer. Expressed by the venom gland.

The protein resides in the secreted. In vitro, reversibly blocks human muscle-type nicotinic acetylcholine receptors (nAChR) alpha-1-beta-1-epsilon-delta/CHRNA1-CHRNB1-CHRNE-CHRND (EC(50)=0.44 uM) and alpha-1-beta-1-gamma-delta/CHRNA1-CHRNB1-CHRNG-CHRND (EC(50)=1.56 uM). Binds to nAChR from T.californica (IC(50)=0.03-0.18 uM), human neuronal nAChR alpha-7/CHRNA7 (IC(50)=22 uM) and acetylcholine-binding proteins (AChBP) from L.stagnalis (IC(50)=63 uM) and A.californica (IC(50)=230 uM). The chain is Azemiopsin from Azemiops feae (Fea's viper).